Reading from the N-terminus, the 67-residue chain is ATP synthase F(0) complex subunit 8 (67 aa).

The helical transmembrane segment at 8-24 (TWFITIISSMITLFILF) threads the bilayer. Position 54 is an N6-acetyllysine; alternate (K54). K54 is modified (N6-succinyllysine; alternate). K57 carries the N6-acetyllysine modification.

Belongs to the ATPase protein 8 family. As to quaternary structure, component of the ATP synthase complex composed at least of ATP5F1A/subunit alpha, ATP5F1B/subunit beta, ATP5MC1/subunit c (homooctomer), MT-ATP6/subunit a, MT-ATP8/subunit 8, ATP5ME/subunit e, ATP5MF/subunit f, ATP5MG/subunit g, ATP5MK/subunit k, ATP5MJ/subunit j, ATP5F1C/subunit gamma, ATP5F1D/subunit delta, ATP5F1E/subunit epsilon, ATP5PF/subunit F6, ATP5PB/subunit b, ATP5PD/subunit d, ATP5PO/subunit OSCP. ATP synthase complex consists of a soluble F(1) head domain (subunits alpha(3) and beta(3)) - the catalytic core - and a membrane F(0) domain - the membrane proton channel (subunits c, a, 8, e, f, g, k and j). These two domains are linked by a central stalk (subunits gamma, delta, and epsilon) rotating inside the F1 region and a stationary peripheral stalk (subunits F6, b, d, and OSCP). Interacts with PRICKLE3.

The protein resides in the mitochondrion membrane. In terms of biological role, subunit 8, of the mitochondrial membrane ATP synthase complex (F(1)F(0) ATP synthase or Complex V) that produces ATP from ADP in the presence of a proton gradient across the membrane which is generated by electron transport complexes of the respiratory chain. ATP synthase complex consist of a soluble F(1) head domain - the catalytic core - and a membrane F(1) domain - the membrane proton channel. These two domains are linked by a central stalk rotating inside the F(1) region and a stationary peripheral stalk. During catalysis, ATP synthesis in the catalytic domain of F(1) is coupled via a rotary mechanism of the central stalk subunits to proton translocation. In vivo, can only synthesize ATP although its ATP hydrolase activity can be activated artificially in vitro. Part of the complex F(0) domain. The polypeptide is ATP synthase F(0) complex subunit 8 (Mus musculus (Mouse)).